Here is a 422-residue protein sequence, read N- to C-terminus: Mannosylglycerate synthase (422 aa).

Residues 7 to 11 (PFKEE), glutamine 66, lysine 77, aspartate 101, and 101 to 102 (DS) each bind GDP-alpha-D-mannose. (R)-glycerate is bound by residues arginine 132 and 137–140 (AMIT). GDP-alpha-D-mannose is bound by residues leucine 164, aspartate 193, and tyrosine 221.

This sequence belongs to the glycosyltransferase 78 family.

It catalyses the reaction (R)-glycerate + GDP-alpha-D-mannose = (2R)-2-O-(alpha-D-mannosyl)-glycerate + GDP + H(+). The catalysed reaction is GDP-alpha-D-glucose + (R)-glycerate = (2R)-2-O-(alpha-D-glucopyranosyl)-glycerate + GDP + H(+). With respect to regulation, activity is not dependent on divalent cations, but it is enhanced by Mg(2+). In terms of biological role, involved in the biosynthesis of the compatible solute alpha-D-mannosyl-glycerate (MG). Catalyzes the condensation of GDP-alpha-D-mannose (GDP-Man) with D-glycerate to produce alpha-D-mannosyl-glycerate. Can also use GDP-alpha-D-glucose (GDP-Glc) as sugar donor to produce alpha-D-glucopyranosyl-glycerate (GG). This chain is Mannosylglycerate synthase, found in Selaginella moellendorffii (Spikemoss).